The chain runs to 174 residues: Regulator of G-protein signaling 8 (174 aa).

Residues 46-162 form the RGS domain; that stretch reads SFDILLSNKY…IRSKIYQDLL (117 aa).

The protein resides in the cell membrane. The protein localises to the membrane. It localises to the perikaryon. It is found in the cell projection. Its subcellular location is the dendrite. The protein resides in the nucleus. Functionally, regulates G protein-coupled receptor signaling cascades, including signaling via muscarinic acetylcholine receptors and dopamine receptors. Inhibits signal transduction by increasing the GTPase activity of G protein alpha subunits, thereby driving them into their inactive GDP-bound form. Modulates the activity of potassium channels that are activated in response to G protein-coupled receptor signaling. The polypeptide is Regulator of G-protein signaling 8 (rgs8) (Danio rerio (Zebrafish)).